The sequence spans 100 residues: Urease subunit gamma (100 aa).

It belongs to the urease gamma subunit family. As to quaternary structure, heterotrimer of UreA (gamma), UreB (beta) and UreC (alpha) subunits. Three heterotrimers associate to form the active enzyme.

Its subcellular location is the cytoplasm. It carries out the reaction urea + 2 H2O + H(+) = hydrogencarbonate + 2 NH4(+). The protein operates within nitrogen metabolism; urea degradation; CO(2) and NH(3) from urea (urease route): step 1/1. In Ruegeria pomeroyi (strain ATCC 700808 / DSM 15171 / DSS-3) (Silicibacter pomeroyi), this protein is Urease subunit gamma.